The following is a 313-amino-acid chain: Cilia- and flagella-associated protein 36 (313 aa).

Phosphoserine occurs at positions 85 and 147. Positions 147-187 form a coiled coil; the sequence is SDLEQEEMKILKEVLRKSKEEYDQEEERKRKKQLSEAKTEE. 2 disordered regions span residues 165–204 and 262–292; these read KEEY…SQGD and KIKQ…TAEE. A compositionally biased stretch (basic and acidic residues) spans 179–189; sequence QLSEAKTEEHP. Over residues 192–203 the composition is skewed to polar residues; that stretch reads ANETAKMSNSQG. S201 is subject to Phosphoserine. Residues 271 to 292 show a composition bias toward basic and acidic residues; that stretch reads QKGKPAGEVEEMTEKPEMTAEE.

It belongs to the CFAP36 family. Interacts with ARL3.

Its subcellular location is the nucleus. It is found in the cytoplasm. The protein localises to the cell projection. The protein resides in the cilium. It localises to the flagellum. Functionally, may act as an effector for ARL3. This is Cilia- and flagella-associated protein 36 from Bos taurus (Bovine).